Reading from the N-terminus, the 564-residue chain is Putative zinc metalloproteinase in scaA 5'region (564 aa).

One can recognise a Peptidase M13 domain in the interval Met1–Phe564. A Zn(2+)-binding site is contributed by His478. Glu479 is a catalytic residue. 2 residues coordinate Zn(2+): His482 and Glu538. The active-site Proton donor is Asp542.

This sequence belongs to the peptidase M13 family. Zn(2+) is required as a cofactor.

This chain is Putative zinc metalloproteinase in scaA 5'region, found in Streptococcus gordonii (strain Challis / ATCC 35105 / BCRC 15272 / CH1 / DL1 / V288).